A 485-amino-acid polypeptide reads, in one-letter code: Cholesterol 16,22-dihydroxylase CYP90G4 (485 aa).

A helical transmembrane segment spans residues 4–24; sequence VVILFFLFPTLLVLVVAVLGL. Cys-432 serves as a coordination point for heme.

Belongs to the cytochrome P450 family. In terms of tissue distribution, mainly expressed in leaves and, at low levels, in roots and stems.

It is found in the membrane. It carries out the reaction cholesterol + 2 reduced [NADPH--hemoprotein reductase] + 2 O2 = (16S,22S)-dihydroxycholesterol + 2 oxidized [NADPH--hemoprotein reductase] + 2 H2O + 2 H(+). The protein operates within steroid metabolism; cholesterol metabolism. Its function is as follows. Involved in the biosynthesis of spiroketal steroid and saponin natural products from cholesterol such as diosgenin and analogs (e.g. furostanol and spirostanol), plant defense compounds used as main precursors for the industrial production of steroid hormones. During the 5,6-spiroketalization of cholesterol, catalyzes the hydroxylation of cholesterol to form 16S,22S-dihydroxycholesterol and, possibly, the subsequent conversion of 16S,22S-dihydroxycholesterol into 16-oxo-22-hydroxy-cholesterol and 16-hydroxy-22-oxo-cholesterol. 16-hydroxy-22-oxo-cholesterol submit a spontaneous reaction leading to the production of furostanol-type steroid diastereomers, precursors of diosgenin. The sequence is that of Cholesterol 16,22-dihydroxylase CYP90G4 from Paris polyphylla (Daiswa polyphylla).